A 378-amino-acid chain; its full sequence is tRNA-specific 2-thiouridylase MnmA (378 aa).

ATP-binding positions include 9–16 (GVSGGVDS) and Met35. The interval 94–96 (NPD) is interaction with target base in tRNA. The active-site Nucleophile is Cys99. Cys99 and Cys195 are joined by a disulfide. Gly123 contributes to the ATP binding site. The tract at residues 145–147 (KDQ) is interaction with tRNA. Cys195 (cysteine persulfide intermediate) is an active-site residue. The segment at 307-308 (RY) is interaction with tRNA.

Belongs to the MnmA/TRMU family.

Its subcellular location is the cytoplasm. The catalysed reaction is S-sulfanyl-L-cysteinyl-[protein] + uridine(34) in tRNA + AH2 + ATP = 2-thiouridine(34) in tRNA + L-cysteinyl-[protein] + A + AMP + diphosphate + H(+). Its function is as follows. Catalyzes the 2-thiolation of uridine at the wobble position (U34) of tRNA, leading to the formation of s(2)U34. The sequence is that of tRNA-specific 2-thiouridylase MnmA from Xanthomonas oryzae pv. oryzae (strain PXO99A).